The following is a 145-amino-acid chain: Small ribosomal subunit protein eS19 (145 aa).

Position 23 is an N6-acetyllysine (Lys23). Arg67 is subject to Omega-N-methylarginine. N6-acetyllysine occurs at positions 111 and 115. Lys143 is subject to N6-succinyllysine.

Belongs to the eukaryotic ribosomal protein eS19 family. As to quaternary structure, component of the small ribosomal subunit. Part of the small subunit (SSU) processome, composed of more than 70 proteins and the RNA chaperone small nucleolar RNA (snoRNA) U3. Interacts with RPS19BP1; the interaction is direct and mediates the integration of RPS19 in state post-A1. Interacts with RPS19BP1.

It is found in the cytoplasm. Its subcellular location is the nucleus. It localises to the nucleolus. Functionally, component of the small ribosomal subunit. The ribosome is a large ribonucleoprotein complex responsible for the synthesis of proteins in the cell. Required for pre-rRNA processing and maturation of 40S ribosomal subunits. Part of the small subunit (SSU) processome, first precursor of the small eukaryotic ribosomal subunit. During the assembly of the SSU processome in the nucleolus, many ribosome biogenesis factors, an RNA chaperone and ribosomal proteins associate with the nascent pre-rRNA and work in concert to generate RNA folding, modifications, rearrangements and cleavage as well as targeted degradation of pre-ribosomal RNA by the RNA exosome. The polypeptide is Small ribosomal subunit protein eS19 (RPS19) (Pongo abelii (Sumatran orangutan)).